Here is a 184-residue protein sequence, read N- to C-terminus: ATP synthase subunit b, chloroplastic (184 aa).

The chain crosses the membrane as a helical span at residues Leu27–Leu49.

It belongs to the ATPase B chain family. As to quaternary structure, F-type ATPases have 2 components, F(1) - the catalytic core - and F(0) - the membrane proton channel. F(1) has five subunits: alpha(3), beta(3), gamma(1), delta(1), epsilon(1). F(0) has four main subunits: a(1), b(1), b'(1) and c(10-14). The alpha and beta chains form an alternating ring which encloses part of the gamma chain. F(1) is attached to F(0) by a central stalk formed by the gamma and epsilon chains, while a peripheral stalk is formed by the delta, b and b' chains.

The protein resides in the plastid. Its subcellular location is the chloroplast thylakoid membrane. In terms of biological role, f(1)F(0) ATP synthase produces ATP from ADP in the presence of a proton or sodium gradient. F-type ATPases consist of two structural domains, F(1) containing the extramembraneous catalytic core and F(0) containing the membrane proton channel, linked together by a central stalk and a peripheral stalk. During catalysis, ATP synthesis in the catalytic domain of F(1) is coupled via a rotary mechanism of the central stalk subunits to proton translocation. Its function is as follows. Component of the F(0) channel, it forms part of the peripheral stalk, linking F(1) to F(0). The chain is ATP synthase subunit b, chloroplastic from Solanum bulbocastanum (Wild potato).